Reading from the N-terminus, the 247-residue chain is Probable transcriptional regulatory protein GM21_0933 (247 aa).

It belongs to the TACO1 family.

Its subcellular location is the cytoplasm. This chain is Probable transcriptional regulatory protein GM21_0933, found in Geobacter sp. (strain M21).